Reading from the N-terminus, the 678-residue chain is NADPH--cytochrome P450 reductase (678 aa).

N-acetylglycine is present on glycine 2. The Lumenal segment spans residues 2-21; it reads GDSHVDTGATSTEAVAEEVS. Residues 22–42 traverse the membrane as a helical segment; sequence LFSMTDMILLSVLVGFLTYFF. Residues 43–678 are Cytoplasmic-facing; it reads LFRKKKEEIP…KGRYSLDVWS (636 aa). Serine 63 is modified (phosphoserine). The 145-residue stretch at 80-224 folds into the Flavodoxin-like domain; it reads IIVFYGSQTG…DFITWREQFW (145 aa). FMN is bound by residues 86 to 91, 138 to 141, 173 to 182, and aspartate 208; these read SQTGTA, ATYG, and LGNKTYEHFN. The FAD-binding FR-type domain occupies 279-521; that stretch reads KNPFLAAVTT…FVRKSQFRLP (243 aa). Position 298 (arginine 298) interacts with NADP(+). FAD is bound by residues arginine 424, 454 to 457, 472 to 474, tyrosine 478, and 488 to 491; these read RYYS, CAV, and GVAT. NADP(+) contacts are provided by residues threonine 535, 596 to 597, 602 to 606, and aspartate 639; these read SR and KVYVQ. Tryptophan 677 lines the FAD pocket.

This sequence belongs to the NADPH--cytochrome P450 reductase family. In the N-terminal section; belongs to the flavodoxin family. The protein in the C-terminal section; belongs to the flavoprotein pyridine nucleotide cytochrome reductase family. The cofactor is FAD. It depends on FMN as a cofactor.

Its subcellular location is the endoplasmic reticulum membrane. The enzyme catalyses 2 oxidized [cytochrome P450] + NADPH = 2 reduced [cytochrome P450] + NADP(+) + H(+). Functionally, this enzyme is required for electron transfer from NADP to cytochrome P450 in microsomes. It can also provide electron transfer to heme oxygenase and cytochrome B5. The chain is NADPH--cytochrome P450 reductase from Cavia porcellus (Guinea pig).